A 377-amino-acid chain; its full sequence is Nuclear pore complex protein NUP54 (377 aa).

Low complexity predominate over residues 1–18 (MFGTPSSSPSFGTPSSTP). The segment at 1–104 (MFGTPSSSPS…NTAQQQQQTP (104 aa)) is disordered. 7 consecutive repeat copies span residues 2–3 (FG), 11–12 (FG), 20–21 (FG), 27–28 (FG), 36–37 (FG), 49–50 (FG), and 87–88 (FG). The segment at 2–88 (FGTPSSSPSF…FQQQPSSNFG (87 aa)) is 7 X 2 AA repeats of F-G. Polar residues predominate over residues 19-32 (AFGTSSPAFGTPSA). The segment covering 39 to 104 (PSNPSFSSGG…NTAQQQQQTP (66 aa)) has biased composition (low complexity).

Belongs to the NUP54 family. As to quaternary structure, part of the nuclear pore complex (NPC). The NPC has an eight-fold symmetrical structure comprising a central transport channel and two rings, the cytoplasmic and nuclear rings, to which eight filaments are attached. The cytoplasmic filaments have loose ends, while the nuclear filaments are joined in a distal ring, forming a nuclear basket. NPCs are highly dynamic in configuration and composition, and can be devided in 3 subcomplexes, the NUP62 subcomplex, the NUP107-160 subcomplex and the NUP93 subcomplex, containing approximately 30 different nucleoporin proteins.

It localises to the nucleus envelope. The protein localises to the nucleus. It is found in the nuclear pore complex. The polypeptide is Nuclear pore complex protein NUP54 (Arabidopsis thaliana (Mouse-ear cress)).